The following is a 484-amino-acid chain: Glucan endo-1,3-beta-glucosidase 5 (484 aa).

A signal peptide spans 1 to 26 (MLFKGVFAVFFVITLLYASLLIEVEG). Residue Asn-102 is glycosylated (N-linked (GlcNAc...) asparagine). Catalysis depends on Glu-122, which acts as the Proton donor. 2 N-linked (GlcNAc...) asparagine glycosylation sites follow: Asn-129 and Asn-260. Catalysis depends on Glu-267, which acts as the Nucleophile. Cys-366 and Cys-428 are disulfide-bonded. N-linked (GlcNAc...) asparagine glycosylation is present at Asn-409. Ala-460 is lipidated: GPI-anchor amidated alanine. A propeptide spans 461-484 (SAMMPITRSTAVLLLLSICLYIVL) (removed in mature form).

It belongs to the glycosyl hydrolase 17 family. Post-translationally, contains two additional disulfide bonds.

The protein resides in the cell membrane. It carries out the reaction Hydrolysis of (1-&gt;3)-beta-D-glucosidic linkages in (1-&gt;3)-beta-D-glucans.. This chain is Glucan endo-1,3-beta-glucosidase 5, found in Arabidopsis thaliana (Mouse-ear cress).